The primary structure comprises 678 residues: Probable antibacterial peptide polyprotein (678 aa).

A run of 14 repeats spans residues 1–67, 68–114, 115–161, 162–208, 209–255, 256–302, 303–349, 350–396, 397–443, 444–490, 491–537, 538–584, 585–631, and 632–678. Positions 1–678 are 14 X approximate tandem repeats; it reads MRSPRVIHLA…SEGVVLPEVR (678 aa). A glycan (O-linked (GalNAc...) threonine) is linked at Thr32. 2 disordered regions span residues 58–97 and 113–678; these read SEAE…DASL and VRER…PEVR. Residues 64–73 show a composition bias toward basic and acidic residues; sequence PEVRERRSPV. Residues Thr83 and Thr130 are each glycosylated (O-linked (GalNAc...) threonine). Residues 145 to 157 are compositionally biased toward low complexity; it reads ESELSPLSEAEVL. The span at 158–167 shows a compositional bias: basic and acidic residues; sequence PEVRERRSPV. Thr177 carries an O-linked (GalNAc...) threonine glycan. Residues 188 to 204 are compositionally biased toward low complexity; the sequence is VASLESELSPLSEAEVL. A compositionally biased stretch (basic and acidic residues) spans 205-214; it reads PEVRERRSPV. Residues Thr224 and Thr271 are each glycosylated (O-linked (GalNAc...) threonine). A compositionally biased stretch (basic and acidic residues) spans 299 to 308; it reads PEVRERRSPV. An O-linked (GalNAc...) threonine glycan is attached at Thr318. Over residues 333 to 345 the composition is skewed to low complexity; sequence ESELSPLSEAEVL. Positions 346–355 are enriched in basic and acidic residues; it reads PEVRERRSPV. Thr365 is a glycosylation site (O-linked (GalNAc...) threonine). Low complexity predominate over residues 380–392; it reads ESELSPLSEAEVL. The segment covering 393–402 has biased composition (basic and acidic residues); the sequence is PEVRERRSPV. A glycan (O-linked (GalNAc...) threonine) is linked at Thr412. Low complexity predominate over residues 427–439; the sequence is ESELSPLSEAEVL. The span at 440-449 shows a compositional bias: basic and acidic residues; that stretch reads PEVRERRSPV. Thr459 is a glycosylation site (O-linked (GalNAc...) threonine). Residues 474-486 show a composition bias toward low complexity; the sequence is ESELSPLSEAEVL. Positions 487-496 are enriched in basic and acidic residues; sequence PEVRERRSPV. Thr506 is a glycosylation site (O-linked (GalNAc...) threonine). The span at 521 to 533 shows a compositional bias: low complexity; sequence ESELSPSSEAEVL. The span at 534-543 shows a compositional bias: basic and acidic residues; that stretch reads PEVRERRSPV. O-linked (GalNAc...) threonine glycosylation is present at Thr553. Low complexity predominate over residues 568-580; it reads ESELSPLSEAEVL. Positions 581–590 are enriched in basic and acidic residues; sequence PEVRERRSPV. Residue Thr600 is glycosylated (O-linked (GalNAc...) threonine). Over residues 615-627 the composition is skewed to low complexity; that stretch reads ESELSPLSEAEGL. Thr647 carries an O-linked (GalNAc...) threonine glycan.

The protein resides in the secreted. Has antibacterial activity in vitro. In Riptortus clavatus (Bean bug), this protein is Probable antibacterial peptide polyprotein.